We begin with the raw amino-acid sequence, 75 residues long: Exodeoxyribonuclease 7 small subunit (75 aa).

This sequence belongs to the XseB family. Heterooligomer composed of large and small subunits.

The protein localises to the cytoplasm. The enzyme catalyses Exonucleolytic cleavage in either 5'- to 3'- or 3'- to 5'-direction to yield nucleoside 5'-phosphates.. Its function is as follows. Bidirectionally degrades single-stranded DNA into large acid-insoluble oligonucleotides, which are then degraded further into small acid-soluble oligonucleotides. In Anaplasma phagocytophilum (strain HZ), this protein is Exodeoxyribonuclease 7 small subunit.